The chain runs to 722 residues: Delta-like protein 1 (722 aa).

An N-terminal signal peptide occupies residues 1–17 (MGRRSALALAVVSALLC). At 18–545 (QVWSSGVFEL…MESQGGPFPW (528 aa)) the chain is on the extracellular side. In terms of domain architecture, DSL spans 176 to 220 (FVCDEHYYGEGCSVFCRPRDDAFGHFTCGDRGEKMCDPGWKGQYC). 27 disulfide bridges follow: Cys-178/Cys-187, Cys-191/Cys-203, Cys-211/Cys-220, Cys-225/Cys-236, Cys-229/Cys-242, Cys-244/Cys-253, Cys-256/Cys-267, Cys-262/Cys-273, Cys-275/Cys-284, Cys-291/Cys-303, Cys-297/Cys-313, Cys-315/Cys-324, Cys-331/Cys-342, Cys-336/Cys-351, Cys-353/Cys-362, Cys-369/Cys-380, Cys-374/Cys-390, Cys-392/Cys-401, Cys-408/Cys-419, Cys-413/Cys-428, Cys-430/Cys-439, Cys-446/Cys-457, Cys-451/Cys-466, Cys-468/Cys-477, Cys-484/Cys-495, Cys-489/Cys-504, and Cys-506/Cys-515. 3 EGF-like domains span residues 225-253 (CLPGCDDQHGYCDKPGECKCRVGWQGRYC), 256-284 (CIRYPGCLHGTCQQPWQCNCQEGWGGLFC), and 291-324 (CTHHKPCRNGATCTNTGQGSYTCSCRPGYTGANC). One can recognise an EGF-like 4; calcium-binding domain in the interval 331–362 (CAPSPCKNGASCTDLEDSFSCTCPPGFYGKVC). 2 EGF-like domains span residues 369–401 (CADGPCFNGGRCSDNPDGGYTCHCPLGFSGFNC) and 408–439 (CGSSPCSNGAKCVDLGNSYLCRCQAGFSGRYC). An EGF-like 7; calcium-binding domain is found at 446 to 477 (CASSPCANGGTCRDSVNDFSCTCPPGYTGKNC). The N-linked (GlcNAc...) asparagine glycan is linked to Asn-476. An EGF-like 8 domain is found at 484-515 (CEHAPCHNGATCHQRGQRYMCECAQGYGGPNC). Residues 546–568 (VAVCAGVVLVLLLLLGCAAVVVC) traverse the membrane as a helical segment. The Cytoplasmic portion of the chain corresponds to 569 to 722 (VRLKLQKHQP…KDECVIATEV (154 aa)). A Glycyl lysine isopeptide (Lys-Gly) (interchain with G-Cter in ubiquitin) cross-link involves residue Lys-613. Thr-638 is modified (phosphothreonine). Positions 655–664 (RDTHSKRDTK) are enriched in basic and acidic residues. Residues 655 to 697 (RDTHSKRDTKCQSQSSAGEEKIAPTLRGGEIPDRKRPESVYST) form a disordered region. At Ser-693 the chain carries Phosphoserine; by PKB. At Ser-696 the chain carries Phosphoserine. The interaction with MAGI1 stretch occupies residues 719-722 (ATEV).

As to quaternary structure, homodimer. Interacts with TJP1. Interacts with MMP14; inhibits DLL1-induced Notch signaling. Interacts with MAGI1 (via PDZ domain); forms a complex with CTNNB1 and CDH2 and promotes recruitment to the adherens junction and stabilization on the cell surface. Interacts with PSEN1; undergoes a presenilin-dependent gamma-secretase cleavage that releases a Dll1-intracellular form. Interacts with MFAP5. Interacts with MIB1. Interacts with NEURL1B; leads to ubiquitination. Interacts with NEURL1. Interacts with SYNJ2BP; enhances DLL1 protein stability, and promotes Notch signaling in endothelial cells. Interacts with MAGI1, MAGI2, MAGI3 and MPDZ. Interacts (via ubiquitin) with EPN1 (via IUM domain); binding with NOTCH1 attached to neighboring cell, promotes ligand ubiquitination and EPN1 interaction, leading to NECD transendocytosis and Notch signaling. Interacts with NOTCH1. Post-translationally, ubiquitinated by MIB (MIB1 or MIB2), leading to its endocytosis and subsequent degradation. Ubiquitinated; promotes recycling back to the plasma membrane and confers a strong affinity for NOTCH1. Multi-ubiquitination of Lys-613 by MIB1 promotes both cis and trans-interaction with NOTCH1, as well as activation of Notch signaling. Ubiquitinated by NEURL1B. In terms of processing, phosphorylated in a membrane association-dependent manner. Phosphorylation at Ser-696 requires the presence of Ser-693, whereas phosphorylation at Thr-638 and Ser-693 occurs independently of the other sites. Phosphorylation is required for full ligand activity in vitro and affects surface presentation, ectodomain shedding, and endocytosis. Cleaved by MMP14; negatively regulates DLL1-induced Notch signaling in HPCs, modulating B-lymphocyte differentiation in bone marrow. Undergoes two consecutive processing events: a shedding event, partially by ADAM10, that generates a soluble extracellular form and an intracellular membrane-anchored form, followed by a gamma-secretase cleavage releasing an intracellular fragment. Post-translationally, O-fucosylated. Can be elongated to a disaccharide by MFNG. In the embryo, expressed in the paraxial mesoderm and nervous system. Expressed at high levels in adult heart and at lower levels, in adult lung. Highly expressed in satellite cells from masseter and tongue than in satellite cells from leg and extraocular muscle.?.

The protein localises to the apical cell membrane. It is found in the cell junction. It localises to the adherens junction. The protein resides in the membrane raft. Its subcellular location is the cell membrane. The protein localises to the nucleus. Functionally, transmembrane ligand protein of NOTCH1, NOTCH2 and NOTCH3 receptors that binds the extracellular domain (ECD) of Notch receptor in a cis and trans fashion manner. Following transinteraction, ligand cells produce mechanical force that depends of a clathrin-mediated endocytosis, requiring ligand ubiquitination, EPN1 interaction, and actin polymerisation; these events promote Notch receptor extracellular domain (NECD) transendocytosis and triggers Notch signaling through induction of cleavage, hyperphosphorylation, and nuclear accumulation of the intracellular domain of Notch receptors (NICD). Is required for embryonic development and maintenance of adult stem cells in many different tissues and immune systeme; the DLL1-induced Notch signaling is mediated through an intercellular communication that regulates cell lineage, cell specification, cell patterning and morphogenesis through effects on differentiation and proliferation. Plays a role in brain development at different level, namely by regulating neuronal differentiation of neural precursor cells via cell-cell interaction, most likely through the lateral inhibitory system in an endogenous level dependent-manner. During neocortex development, Dll1-Notch signaling transmission is mediated by dynamic interactions between intermediate neurogenic progenitors and radial glia; the cell-cell interactions are mediated via dynamic and transient elongation processes, likely to reactivate/maintain Notch activity in neighboring progenitors, and coordinate progenitor cell division and differentiation across radial and zonal boundaries. During cerebellar development, regulates Bergmann glial monolayer formation and its morphological maturation through a Notch signaling pathway. At the retina and spinal cord level, regulates neurogenesis by preventing the premature differentiation of neural progenitors and also by maintaining progenitors in spinal cord through Notch signaling pathway. Also controls neurogenesis of the neural tube in a progenitor domain-specific fashion along the dorsoventral axis. Maintains quiescence of neural stem cells and plays a role as a fate determinant that segregates asymmetrically to one daughter cell during neural stem cells mitosis, resulting in neuronal differentiation in Dll1-inheriting cell. Plays a role in immune systeme development, namely the development of all T-cells and marginal zone (MZ) B cells. Blocks the differentiation of progenitor cells into the B-cell lineage while promoting the emergence of a population of cells with the characteristics of a T-cell/NK-cell precursor. Upon MMP14 cleavage, negatively regulates Notch signaling in haematopoietic progenitor cells to specifically maintain normal B-cell development in bone marrow. Also plays a role during muscle development. During early development, inhibits myoblasts differentiation from the medial dermomyotomal lip and later regulates progenitor cell differentiation. Directly modulates cell adhesion and basal lamina formation in satellite cells through Notch signaling. Maintains myogenic progenitors pool by suppressing differentiation through down-regulation of MYOD1 and is required for satellite cell homing and PAX7 expression. During craniofacial and trunk myogenesis suppresses differentiation of cranial mesoderm-derived and somite-derived muscle via MYOD1 regulation but in cranial mesoderm-derived progenitors, is neither required for satellite cell homing nor for PAX7 expression. Also plays a role during pancreatic cell development. During type B pancreatic cell development, may be involved in the initiation of proximodistal patterning in the early pancreatic epithelium. Stimulates multipotent pancreatic progenitor cells proliferation and pancreatic growth by maintaining HES1 expression and PTF1A protein levels. During fetal stages of development, is required to maintain arterial identity and the responsiveness of arterial endothelial cells for VEGFA through regulation of KDR activation and NRP1 expression. Controls sprouting angiogenesis and subsequent vertical branch formation through regulation on tip cell differentiation. Negatively regulates goblet cell differentiation in intestine and controls secretory fat commitment through lateral inhibition in small intestine. Plays a role during inner ear development; negatively regulates auditory hair cell differentiation. Plays a role during nephron development through Notch signaling pathway. Regulates growth, blood pressure and energy homeostasis. In Mus musculus (Mouse), this protein is Delta-like protein 1 (Dll1).